We begin with the raw amino-acid sequence, 428 residues long: GTPase Obg (428 aa).

The region spanning 1–158 (MFVDQVQVEV…RFIKLELKVL (158 aa)) is the Obg domain. Residues 159-333 (ADVGLVGFPS…LMHKTAEVLK (175 aa)) enclose the OBG-type G domain. GTP is bound by residues 165–172 (GFPSVGKS), 190–194 (FTTLV), 212–215 (DLPG), 282–285 (TKMD), and 314–316 (SSL). Mg(2+)-binding residues include S172 and T192. Residues 350 to 428 (YKYQPEPALK…IDDFTFEFVE (79 aa)) enclose the OCT domain.

This sequence belongs to the TRAFAC class OBG-HflX-like GTPase superfamily. OBG GTPase family. As to quaternary structure, monomer. Mg(2+) is required as a cofactor.

It localises to the cytoplasm. An essential GTPase which binds GTP, GDP and possibly (p)ppGpp with moderate affinity, with high nucleotide exchange rates and a fairly low GTP hydrolysis rate. Plays a role in control of the cell cycle, stress response, ribosome biogenesis and in those bacteria that undergo differentiation, in morphogenesis control. The polypeptide is GTPase Obg (Lacticaseibacillus paracasei (strain ATCC 334 / BCRC 17002 / CCUG 31169 / CIP 107868 / KCTC 3260 / NRRL B-441) (Lactobacillus paracasei)).